A 192-amino-acid chain; its full sequence is BREX protein BrxB (192 aa).

This sequence belongs to the BrxB family.

Functionally, BREX systems (bacteriophage exclusion) provide immunity against bacteriophage. Part of a type 1 BREX system. This system allows phage adsorption but prevents phage DNA replication, without degradation of the phage DNA. Methylation of bacterial DNA by PglX probably guides self/non-self discrimination. When the brxA-brxB-brxC-pglX and pglZ-brxL operons are transformed into a susceptible B.subtilis strain (BEST7003) they confer resistance to bacteriophages SPbeta, SP16, Zeta, phi3T and SP02 and partial protection to phages SP01 and SP82G (these include lytic and temperate phage). They do not protect against phages phi105, rho10 or rho14. Additionally confers a very slight reduction in efficiency of plasmid transformation. The chain is BREX protein BrxB from Bacillus cereus (strain H3081.97).